We begin with the raw amino-acid sequence, 196 residues long: Molybdopterin synthase catalytic subunit (196 aa).

Substrate is bound by residues 110-111, K126, and 133-135; these read HR and KKE. The segment at 142–196 is disordered; it reads GGIWRANRDGAVGERVDEDEEKKKPDMGPHGPILRPSRPGERGHGPVVRNHQLGS. Positions 147-168 are enriched in basic and acidic residues; the sequence is ANRDGAVGERVDEDEEKKKPDM.

It belongs to the MoaE family. MOCS2B subfamily. Heterotetramer; composed of 2 small (MOCS2A) and 2 large (MOCS2B) subunits.

It localises to the cytoplasm. The catalysed reaction is 2 [molybdopterin-synthase sulfur-carrier protein]-C-terminal-Gly-aminoethanethioate + cyclic pyranopterin phosphate + H2O = molybdopterin + 2 [molybdopterin-synthase sulfur-carrier protein]-C-terminal Gly-Gly + 2 H(+). It participates in cofactor biosynthesis; molybdopterin biosynthesis. Functionally, catalytic subunit of the molybdopterin synthase complex, a complex that catalyzes the conversion of precursor Z into molybdopterin. Acts by mediating the incorporation of 2 sulfur atoms from thiocarboxylated MOCS2A into precursor Z to generate a dithiolene group. This chain is Molybdopterin synthase catalytic subunit, found in Sclerotinia sclerotiorum (strain ATCC 18683 / 1980 / Ss-1) (White mold).